Here is a 421-residue protein sequence, read N- to C-terminus: Structure-specific endonuclease subunit SLX1 (421 aa).

Residues 13 to 95 enclose the GIY-YIG domain; sequence AFYCCYLLRS…QHTKESRHAE (83 aa). Disordered stretches follow at residues 34 to 57 and 96 to 120; these read TPEP…KTSS and VERC…KRAG. The segment at 225–280 adopts an SLX1-type zinc-finger fold; sequence CGVCKQRLNPRNDMIAICSHSLCRCASHLLCLSAHFLEAAGFIGKLIPKEGTCPAC. The segment covering 310–322 has biased composition (basic residues); the sequence is RRRTEQVGKRKIS. A disordered region spans residues 310–339; sequence RRRTEQVGKRKISNHVSSEKGESEASMPST.

This sequence belongs to the SLX1 family. Forms a heterodimer with SLX4. It depends on a divalent metal cation as a cofactor.

It is found in the nucleus. Catalytic subunit of the SLX1-SLX4 structure-specific endonuclease that resolves DNA secondary structures generated during DNA repair and recombination. Has endonuclease activity towards branched DNA substrates, introducing single-strand cuts in duplex DNA close to junctions with ss-DNA. In Ajellomyces capsulatus (strain G186AR / H82 / ATCC MYA-2454 / RMSCC 2432) (Darling's disease fungus), this protein is Structure-specific endonuclease subunit SLX1.